The following is a 770-amino-acid chain: Coiled-coil alpha-helical rod protein 1 (770 aa).

Coiled coils occupy residues 56–289 (STVT…DLQA), 334–420 (LRNW…RQEQ), and 476–669 (GLMA…RKEE). 4 disordered regions span residues 573 to 592 (LEAA…SLRQ), 641 to 672 (LRQI…EGQR), 700 to 721 (NKKC…AASC), and 744 to 770 (SRDE…PLLS). A compositionally biased stretch (basic and acidic residues) spans 648-672 (ATQEKERNQELRRLQDEARKEEGQR). The segment covering 701 to 721 (KKCSPRSVESSSSESPAAASC) has biased composition (low complexity).

It is found in the cytoplasm. The protein localises to the nucleus. In terms of biological role, may be a regulator of keratinocyte proliferation or differentiation. This chain is Coiled-coil alpha-helical rod protein 1 (Cchcr1), found in Mus musculus (Mouse).